Here is a 241-residue protein sequence, read N- to C-terminus: Probable transcriptional regulatory protein Daro_4067 (241 aa).

Residues 1 to 22 (MAGHSKWANIQHRKGRQDEKRG) form a disordered region.

The protein belongs to the TACO1 family.

The protein resides in the cytoplasm. This is Probable transcriptional regulatory protein Daro_4067 from Dechloromonas aromatica (strain RCB).